Consider the following 869-residue polypeptide: Leucine--tRNA ligase (869 aa).

Positions 51 to 61 (PYPSGRIHMGH) match the 'HIGH' region motif. The 'KMSKS' region signature appears at 636–640 (KMSKS). Residue Lys-639 participates in ATP binding.

This sequence belongs to the class-I aminoacyl-tRNA synthetase family.

It localises to the cytoplasm. The enzyme catalyses tRNA(Leu) + L-leucine + ATP = L-leucyl-tRNA(Leu) + AMP + diphosphate. The chain is Leucine--tRNA ligase from Dinoroseobacter shibae (strain DSM 16493 / NCIMB 14021 / DFL 12).